A 276-amino-acid chain; its full sequence is uncharacterized protein (276 aa).

The segment at 1-20 (MMSDEQHQGGDGQTTTNTNT) is disordered.

This is an uncharacterized protein from Dictyostelium discoideum (Social amoeba).